Consider the following 137-residue polypeptide: Cytochrome c2 (137 aa).

The signal sequence occupies residues Met1–Ala21. Heme c-binding residues include Cys34, Cys37, His38, and Met117.

It belongs to the cytochrome c family. Post-translationally, binds 1 heme c group covalently per subunit.

Cytochrome c2 is found mainly in purple, non-sulfur, photosynthetic bacteria where it functions as the electron donor to the oxidized bacteriochlorophyll in the photophosphorylation pathway. However, it may also have a role in the respiratory chain and is found in some non-photosynthetic bacteria. This is Cytochrome c2 (cycA) from Rhodobacter capsulatus (strain ATCC BAA-309 / NBRC 16581 / SB1003).